A 640-amino-acid polypeptide reads, in one-letter code: Threonine--tRNA ligase (640 aa).

Residues 1–61 enclose the TGS domain; that stretch reads MPTITLPDGS…DSDATLQIIT (61 aa). Residues 242–533 form a catalytic region; sequence DHRKIGKRLG…LIEHYEGAFP (292 aa). Zn(2+)-binding residues include Cys333, His384, and His510.

It belongs to the class-II aminoacyl-tRNA synthetase family. Homodimer. It depends on Zn(2+) as a cofactor.

It localises to the cytoplasm. The catalysed reaction is tRNA(Thr) + L-threonine + ATP = L-threonyl-tRNA(Thr) + AMP + diphosphate + H(+). Its function is as follows. Catalyzes the attachment of threonine to tRNA(Thr) in a two-step reaction: L-threonine is first activated by ATP to form Thr-AMP and then transferred to the acceptor end of tRNA(Thr). Also edits incorrectly charged L-seryl-tRNA(Thr). The polypeptide is Threonine--tRNA ligase (Pseudomonas fluorescens (strain Pf0-1)).